A 546-amino-acid chain; its full sequence is MTTRYIFVTGGVVSSLGKGIAAASLAAILEARGLNVTIMKLDPYINVDPGTMSPTQHGEVFVTEDGAETDLDLGHYERFIRTKMNRRNNFTTGRIYEEVLRKERRGDYLGATIQVIPHITNAIKEKVLAGGEGHDVAIVEIGGTVGDIESLPFLESIRQLGVELGRDRTLFMHLTLVPFLGAAGEVKTKPTQHSVKELRSIGIAPDVLVCRGDRAIPANEKAKISLFCNVEERAVISLKDVDSIYKIPALLKAQGLDQLVTKRFGIDCKEADLAEWEKVVYQEANPVGEVTIGMVGKYIELPDAYKSVNEALKHAGLFNRVSVNIKYIDSQNVEAKGDEVLQGLDGILVPGGFGERGVEGKIMAAQFARENNLPYFGICLGMQVALIEFARHVAGLEGAHSTEFDKNTPHPVVGLITEWINEDGQVEERHEESDLGGTMRLGAQLCHLEEGTKAAAAYKSTTCVERHRHRYEVNNNYKERLEKAGLIFSGLSSDRSLVEMIELPNHPWFVAGQFHPEFTSTPRDGQPLFEGFVAAAYTYQKRDLED.

An amidoligase domain region spans residues 1-266 (MTTRYIFVTG…DQLVTKRFGI (266 aa)). A CTP-binding site is contributed by Ser14. Ser14 serves as a coordination point for UTP. ATP contacts are provided by residues 15–20 (SLGKGI) and Asp72. Residues Asp72 and Glu140 each contribute to the Mg(2+) site. Residues 147 to 149 (DIE), 187 to 192 (KTKPTQ), and Lys223 each bind CTP. UTP is bound by residues 187–192 (KTKPTQ) and Lys223. 239-241 (KDV) contacts ATP. The 252-residue stretch at 291-542 (TIGMVGKYIE…VAAAYTYQKR (252 aa)) folds into the Glutamine amidotransferase type-1 domain. Position 352 (Gly352) interacts with L-glutamine. The Nucleophile; for glutamine hydrolysis role is filled by Cys379. L-glutamine is bound by residues 380 to 383 (LGMQ), Glu403, and Arg470. Active-site residues include His515 and Glu517.

This sequence belongs to the CTP synthase family. As to quaternary structure, homotetramer.

The catalysed reaction is UTP + L-glutamine + ATP + H2O = CTP + L-glutamate + ADP + phosphate + 2 H(+). The enzyme catalyses L-glutamine + H2O = L-glutamate + NH4(+). It carries out the reaction UTP + NH4(+) + ATP = CTP + ADP + phosphate + 2 H(+). It functions in the pathway pyrimidine metabolism; CTP biosynthesis via de novo pathway; CTP from UDP: step 2/2. Allosterically activated by GTP, when glutamine is the substrate; GTP has no effect on the reaction when ammonia is the substrate. The allosteric effector GTP functions by stabilizing the protein conformation that binds the tetrahedral intermediate(s) formed during glutamine hydrolysis. Inhibited by the product CTP, via allosteric rather than competitive inhibition. Its function is as follows. Catalyzes the ATP-dependent amination of UTP to CTP with either L-glutamine or ammonia as the source of nitrogen. Regulates intracellular CTP levels through interactions with the four ribonucleotide triphosphates. The chain is CTP synthase from Shewanella halifaxensis (strain HAW-EB4).